Reading from the N-terminus, the 185-residue chain is Ribosome-recycling factor (185 aa).

This sequence belongs to the RRF family.

It localises to the cytoplasm. Its function is as follows. Responsible for the release of ribosomes from messenger RNA at the termination of protein biosynthesis. May increase the efficiency of translation by recycling ribosomes from one round of translation to another. The chain is Ribosome-recycling factor from Legionella pneumophila (strain Paris).